Consider the following 177-residue polypeptide: Antigen TpF1 (177 aa).

The protein belongs to the Dps family. Homodecamer; either linked or stabilized by disulfide bonds.

Its function is as follows. May play an important structural role in the outer membrane. The chain is Antigen TpF1 (tpf1) from Treponema pallidum (strain Nichols).